The following is a 190-amino-acid chain: UPF0301 protein Rpic_0619 (190 aa).

The protein belongs to the UPF0301 (AlgH) family.

This chain is UPF0301 protein Rpic_0619, found in Ralstonia pickettii (strain 12J).